Reading from the N-terminus, the 317-residue chain is Beta-ketoacyl-[acyl-carrier-protein] synthase III (317 aa).

Catalysis depends on residues C112 and H244. An ACP-binding region spans residues 245 to 249 (QANLR). N274 is an active-site residue.

It belongs to the thiolase-like superfamily. FabH family. In terms of assembly, homodimer.

It localises to the cytoplasm. The enzyme catalyses malonyl-[ACP] + acetyl-CoA + H(+) = 3-oxobutanoyl-[ACP] + CO2 + CoA. The protein operates within lipid metabolism; fatty acid biosynthesis. Catalyzes the condensation reaction of fatty acid synthesis by the addition to an acyl acceptor of two carbons from malonyl-ACP. Catalyzes the first condensation reaction which initiates fatty acid synthesis and may therefore play a role in governing the total rate of fatty acid production. Possesses both acetoacetyl-ACP synthase and acetyl transacylase activities. Its substrate specificity determines the biosynthesis of branched-chain and/or straight-chain of fatty acids. This Sodalis glossinidius (strain morsitans) protein is Beta-ketoacyl-[acyl-carrier-protein] synthase III.